The primary structure comprises 1255 residues: Receptor tyrosine-protein kinase erbB-2 (1255 aa).

The first 22 residues, 1–22 (MELAALCRWGLLLALLPPGAAS), serve as a signal peptide directing secretion. Residues 23 to 652 (TQVCTGTDMK…PAEQRASPLT (630 aa)) lie on the Extracellular side of the membrane. Cys26 and Cys53 are joined by a disulfide. Asn68 and Asn124 each carry an N-linked (GlcNAc...) asparagine glycan. Cystine bridges form between Cys162–Cys192, Cys195–Cys204, Cys199–Cys212, Cys220–Cys227, Cys224–Cys235, Cys236–Cys244, Cys240–Cys252, Cys255–Cys264, Cys268–Cys295, Cys299–Cys311, Cys315–Cys331, Cys334–Cys338, Cys342–Cys367, Cys475–Cys504, Cys511–Cys520, and Cys515–Cys528. Phosphothreonine is present on Thr182. A glycan (N-linked (GlcNAc...) asparagine) is linked at Asn187. An N-linked (GlcNAc...) asparagine glycan is attached at Asn259. The N-linked (GlcNAc...) asparagine glycan is linked to Asn530. Intrachain disulfides connect Cys531–Cys540, Cys544–Cys560, Cys563–Cys576, Cys567–Cys584, Cys587–Cys596, Cys600–Cys623, Cys626–Cys634, and Cys630–Cys642. N-linked (GlcNAc...) asparagine glycosylation occurs at Asn571. Residue Asn629 is glycosylated (N-linked (GlcNAc...) asparagine). The chain crosses the membrane as a helical span at residues 653–675 (SIISAVVGILLVVVLGVVFGILI). The interval 676 to 689 (KRRQQKIRKYTMRR) is required for interaction with KPNB1 and EEA1. The Nuclear localization signal signature appears at 676–689 (KRRQQKIRKYTMRR). Residues 676-1255 (KRRQQKIRKY…PEYLGLDVPV (580 aa)) lie on the Cytoplasmic side of the membrane. A Protein kinase domain is found at 720-987 (LRKVKVLGSG…RMARDPQRFV (268 aa)). ATP-binding positions include 726–734 (LGSGAFGTV) and Lys753. Asp845 (proton acceptor) is an active-site residue. A Phosphotyrosine modification is found at Tyr877. Disordered regions lie at residues 1035 to 1179 (PAPG…GKNG) and 1196 to 1255 (YLTP…DVPV). Ser1054, Ser1078, Ser1083, and Ser1107 each carry phosphoserine. 2 positions are modified to phosphotyrosine: Tyr1112 and Tyr1139. Pro residues predominate over residues 1146 to 1155 (RPQPPSPREG). Residue Ser1151 is modified to Phosphoserine. Thr1166 is subject to Phosphothreonine. An interaction with PIK3C2B region spans residues 1195-1197 (EYL). Tyr1196 carries the post-translational modification Phosphotyrosine. Position 1248 is a phosphotyrosine; by autocatalysis (Tyr1248).

This sequence belongs to the protein kinase superfamily. Tyr protein kinase family. EGF receptor subfamily. In terms of assembly, homodimer. Heterodimer with EGFR, ERBB3 and ERBB4. Part of a complex with EGFR and either PIK3C2A or PIK3C2B. May interact with PIK3C2B when phosphorylated on Tyr-1196. Interacts with PLXNB1. Interacts (when phosphorylated on Tyr-1248) with MEMO1. Interacts with MUC1; the interaction is enhanced by heregulin (HRG). Interacts (when phosphorylated on Tyr-1139) with GRB7 (via SH2 domain). Interacts (when phosphorylated on Tyr-1248) with ERBIN. Interacts with KPNB1, RANBP2, EEA1, CRM1 and CLTC. Interacts with PTK6. Interacts with RPA194 and ACTB. Interacts with PRKCABP, SRC and MYOC. Interacts (preferentially with the tyrosine phosphorylated form) with CPNE3; this interaction occurs at the cell membrane and is increased in a growth factor heregulin-dependent manner. Interacts with HSP90AA1 and HSP90AB1 in an ATP-dependent manner; the interaction suppresses ERBB2 kinase activity. Interacts with SORL1; this interaction regulates ERBB2 subcellular distribution by promoting its recycling after internalization from endosomes back to the plasma membrane, hence stimulates ERBB2-mediated signaling. Interacts with SH3BGRL. Interacts with ROR1. Post-translationally, autophosphorylated. Autophosphorylation occurs in trans, i.e. one subunit of the dimeric receptor phosphorylates tyrosine residues on the other subunit. Ligand-binding increases phosphorylation on tyrosine residues. Signaling via SEMA4C promotes phosphorylation at Tyr-1248. Dephosphorylated by PTPN12. As to expression, expressed in a variety of tumor tissues including primary breast tumors and tumors from small bowel, esophagus, kidney and mouth.

The protein localises to the cell membrane. Its subcellular location is the cell projection. It is found in the ruffle membrane. It localises to the early endosome. The protein resides in the cytoplasm. The protein localises to the perinuclear region. Its subcellular location is the nucleus. It catalyses the reaction L-tyrosyl-[protein] + ATP = O-phospho-L-tyrosyl-[protein] + ADP + H(+). With respect to regulation, activated by dimerization. Not activated by EGF, TGF-alpha and amphiregulin. Interaction with PTK6 increases its intrinsic kinase activity. In terms of biological role, protein tyrosine kinase that is part of several cell surface receptor complexes, but that apparently needs a coreceptor for ligand binding. Essential component of a neuregulin-receptor complex, although neuregulins do not interact with it alone. GP30 is a potential ligand for this receptor. Regulates outgrowth and stabilization of peripheral microtubules (MTs). Upon ERBB2 activation, the MEMO1-RHOA-DIAPH1 signaling pathway elicits the phosphorylation and thus the inhibition of GSK3B at cell membrane. This prevents the phosphorylation of APC and CLASP2, allowing its association with the cell membrane. In turn, membrane-bound APC allows the localization of MACF1 to the cell membrane, which is required for microtubule capture and stabilization. Its function is as follows. In the nucleus is involved in transcriptional regulation. Associates with the 5'-TCAAATTC-3' sequence in the PTGS2/COX-2 promoter and activates its transcription. Implicated in transcriptional activation of CDKN1A; the function involves STAT3 and SRC. Involved in the transcription of rRNA genes by RNA Pol I and enhances protein synthesis and cell growth. This Homo sapiens (Human) protein is Receptor tyrosine-protein kinase erbB-2 (ERBB2).